Here is a 154-residue protein sequence, read N- to C-terminus: D-aminoacyl-tRNA deacylase (154 aa).

The Gly-cisPro motif, important for rejection of L-amino acids signature appears at 138–139; the sequence is GP.

It belongs to the DTD family. Homodimer.

It localises to the cytoplasm. It catalyses the reaction glycyl-tRNA(Ala) + H2O = tRNA(Ala) + glycine + H(+). It carries out the reaction a D-aminoacyl-tRNA + H2O = a tRNA + a D-alpha-amino acid + H(+). Its function is as follows. An aminoacyl-tRNA editing enzyme that deacylates mischarged D-aminoacyl-tRNAs. Also deacylates mischarged glycyl-tRNA(Ala), protecting cells against glycine mischarging by AlaRS. Acts via tRNA-based rather than protein-based catalysis; rejects L-amino acids rather than detecting D-amino acids in the active site. By recycling D-aminoacyl-tRNA to D-amino acids and free tRNA molecules, this enzyme counteracts the toxicity associated with the formation of D-aminoacyl-tRNA entities in vivo and helps enforce protein L-homochirality. This Halorhodospira halophila (strain DSM 244 / SL1) (Ectothiorhodospira halophila (strain DSM 244 / SL1)) protein is D-aminoacyl-tRNA deacylase.